The sequence spans 961 residues: Leucine--tRNA ligase (961 aa).

Residues 41–51 (PYLNGNLHAGH) carry the 'HIGH' region motif. The short motif at 632–636 (KMSKS) is the 'KMSKS' region element. Lys635 is an ATP binding site.

This sequence belongs to the class-I aminoacyl-tRNA synthetase family.

It is found in the cytoplasm. It carries out the reaction tRNA(Leu) + L-leucine + ATP = L-leucyl-tRNA(Leu) + AMP + diphosphate. This Methanosarcina acetivorans (strain ATCC 35395 / DSM 2834 / JCM 12185 / C2A) protein is Leucine--tRNA ligase.